Consider the following 137-residue polypeptide: ATP synthase epsilon chain (137 aa).

This sequence belongs to the ATPase epsilon chain family. F-type ATPases have 2 components, CF(1) - the catalytic core - and CF(0) - the membrane proton channel. CF(1) has five subunits: alpha(3), beta(3), gamma(1), delta(1), epsilon(1). CF(0) has three main subunits: a, b and c.

Its subcellular location is the cell membrane. Functionally, produces ATP from ADP in the presence of a proton gradient across the membrane. The sequence is that of ATP synthase epsilon chain from Caldicellulosiruptor bescii (strain ATCC BAA-1888 / DSM 6725 / KCTC 15123 / Z-1320) (Anaerocellum thermophilum).